Here is a 569-residue protein sequence, read N- to C-terminus: Proline--tRNA ligase (569 aa).

This sequence belongs to the class-II aminoacyl-tRNA synthetase family. ProS type 1 subfamily. As to quaternary structure, homodimer.

It is found in the cytoplasm. It catalyses the reaction tRNA(Pro) + L-proline + ATP = L-prolyl-tRNA(Pro) + AMP + diphosphate. Functionally, catalyzes the attachment of proline to tRNA(Pro) in a two-step reaction: proline is first activated by ATP to form Pro-AMP and then transferred to the acceptor end of tRNA(Pro). As ProRS can inadvertently accommodate and process non-cognate amino acids such as alanine and cysteine, to avoid such errors it has two additional distinct editing activities against alanine. One activity is designated as 'pretransfer' editing and involves the tRNA(Pro)-independent hydrolysis of activated Ala-AMP. The other activity is designated 'posttransfer' editing and involves deacylation of mischarged Ala-tRNA(Pro). The misacylated Cys-tRNA(Pro) is not edited by ProRS. The protein is Proline--tRNA ligase of Halalkalibacterium halodurans (strain ATCC BAA-125 / DSM 18197 / FERM 7344 / JCM 9153 / C-125) (Bacillus halodurans).